The primary structure comprises 345 residues: Phosphoribosylformylglycinamidine cyclo-ligase (345 aa).

The protein belongs to the AIR synthase family.

The protein resides in the cytoplasm. The enzyme catalyses 2-formamido-N(1)-(5-O-phospho-beta-D-ribosyl)acetamidine + ATP = 5-amino-1-(5-phospho-beta-D-ribosyl)imidazole + ADP + phosphate + H(+). It functions in the pathway purine metabolism; IMP biosynthesis via de novo pathway; 5-amino-1-(5-phospho-D-ribosyl)imidazole from N(2)-formyl-N(1)-(5-phospho-D-ribosyl)glycinamide: step 2/2. This is Phosphoribosylformylglycinamidine cyclo-ligase from Shewanella amazonensis (strain ATCC BAA-1098 / SB2B).